Reading from the N-terminus, the 291-residue chain is 33 kDa chaperonin (291 aa).

Intrachain disulfides connect Cys235–Cys237 and Cys268–Cys271.

The protein belongs to the HSP33 family. Post-translationally, under oxidizing conditions two disulfide bonds are formed involving the reactive cysteines. Under reducing conditions zinc is bound to the reactive cysteines and the protein is inactive.

Its subcellular location is the cytoplasm. In terms of biological role, redox regulated molecular chaperone. Protects both thermally unfolding and oxidatively damaged proteins from irreversible aggregation. Plays an important role in the bacterial defense system toward oxidative stress. The protein is 33 kDa chaperonin of Bacillus velezensis (strain DSM 23117 / BGSC 10A6 / LMG 26770 / FZB42) (Bacillus amyloliquefaciens subsp. plantarum).